A 441-amino-acid chain; its full sequence is Amino-acid acetyltransferase (441 aa).

Residues 295–434 (EQVRRATIND…QELYNYQRRS (140 aa)) enclose the N-acetyltransferase domain.

It belongs to the acetyltransferase family. ArgA subfamily. In terms of assembly, homohexamer.

Its subcellular location is the cytoplasm. It carries out the reaction L-glutamate + acetyl-CoA = N-acetyl-L-glutamate + CoA + H(+). It participates in amino-acid biosynthesis; L-arginine biosynthesis; N(2)-acetyl-L-ornithine from L-glutamate: step 1/4. This is Amino-acid acetyltransferase from Yersinia enterocolitica serotype O:8 / biotype 1B (strain NCTC 13174 / 8081).